The following is a 333-amino-acid chain: Arginase (333 aa).

Position 1 is an N-acetylmethionine (methionine 1). Serine 16 is subject to Phosphoserine. Threonine 77 is subject to Phosphothreonine. Mn(2+) contacts are provided by histidine 123, aspartate 146, histidine 148, and aspartate 150. Substrate-binding positions include 148–152, 159–161, and aspartate 205; these read HADIN and SGN. Residues aspartate 256 and aspartate 258 each coordinate Mn(2+). Position 270 is a phosphothreonine (threonine 270). Threonine 270 and glutamate 301 together coordinate substrate.

Belongs to the arginase family. Homotrimer. Requires Mn(2+) as cofactor.

The enzyme catalyses L-arginine + H2O = urea + L-ornithine. It functions in the pathway nitrogen metabolism; urea cycle; L-ornithine and urea from L-arginine: step 1/1. This is Arginase (CAR1) from Saccharomyces cerevisiae (strain ATCC 204508 / S288c) (Baker's yeast).